The sequence spans 623 residues: Stretch-activated cation channel MID1 (623 aa).

Residues 1-57 (MPAREVYLKRPATRRQLEGICTRYDGQQRITQLDCEEGCSKRTQPPQRLNPRYKSPD) are Extracellular-facing. A helical transmembrane segment spans residues 58-78 (LIHISFIIVLLCILSMTSSVV). The Cytoplasmic portion of the chain corresponds to 79 to 623 (AQTTTGSSSS…DRWGNRWCNG (545 aa)). The segment covering 524-536 (TSTSSGTFPTPST) has biased composition (low complexity). The segment at 524-544 (TSTSSGTFPTPSTVLRTPSSP) is disordered. The tract at residues 600-623 (SYGDGSAAQGVAAQDRWGNRWCNG) is required for targeting to the cell membrane.

Forms an oligomer by disulfide bonds. Interacts with CCH1 to form a Ca(2+) influx channel. Interacts (via C-terminus) with CCP1/cytochrome c peroxidase; the interaction may contribute to cellular detoxification of radicals.

Its subcellular location is the cell membrane. In terms of biological role, calcium-permeable, cation-selective stretch-activated channel (SAC) that functions together with CCH1 to mediate calcium entry into cells. May additionally play a role in cellular detoxification of radicals. In Cryptococcus neoformans var. grubii serotype A (strain H99 / ATCC 208821 / CBS 10515 / FGSC 9487) (Filobasidiella neoformans var. grubii), this protein is Stretch-activated cation channel MID1.